Consider the following 448-residue polypeptide: Bifunctional protein GlmU (448 aa).

The tract at residues Met1–Arg232 is pyrophosphorylase. Residues Leu11–Gly14, Lys25, Gln78, and Gly83–Thr84 contribute to the UDP-N-acetyl-alpha-D-glucosamine site. Position 108 (Asp108) interacts with Mg(2+). UDP-N-acetyl-alpha-D-glucosamine is bound by residues Gly144, Glu158, Asn173, and Asn230. Asn230 serves as a coordination point for Mg(2+). Positions Val233–Gly253 are linker. The tract at residues Gly254–Gly448 is N-acetyltransferase. UDP-N-acetyl-alpha-D-glucosamine contacts are provided by Arg319 and Lys337. The active-site Proton acceptor is the His349. The UDP-N-acetyl-alpha-D-glucosamine site is built by Tyr352 and Asn363. Residues Ala366, Asn372 to Tyr373, Thr409, and Arg426 each bind acetyl-CoA.

In the N-terminal section; belongs to the N-acetylglucosamine-1-phosphate uridyltransferase family. This sequence in the C-terminal section; belongs to the transferase hexapeptide repeat family. Homotrimer. It depends on Mg(2+) as a cofactor.

The protein localises to the cytoplasm. It carries out the reaction alpha-D-glucosamine 1-phosphate + acetyl-CoA = N-acetyl-alpha-D-glucosamine 1-phosphate + CoA + H(+). The enzyme catalyses N-acetyl-alpha-D-glucosamine 1-phosphate + UTP + H(+) = UDP-N-acetyl-alpha-D-glucosamine + diphosphate. Its pathway is nucleotide-sugar biosynthesis; UDP-N-acetyl-alpha-D-glucosamine biosynthesis; N-acetyl-alpha-D-glucosamine 1-phosphate from alpha-D-glucosamine 6-phosphate (route II): step 2/2. It participates in nucleotide-sugar biosynthesis; UDP-N-acetyl-alpha-D-glucosamine biosynthesis; UDP-N-acetyl-alpha-D-glucosamine from N-acetyl-alpha-D-glucosamine 1-phosphate: step 1/1. The protein operates within bacterial outer membrane biogenesis; LPS lipid A biosynthesis. Functionally, catalyzes the last two sequential reactions in the de novo biosynthetic pathway for UDP-N-acetylglucosamine (UDP-GlcNAc). The C-terminal domain catalyzes the transfer of acetyl group from acetyl coenzyme A to glucosamine-1-phosphate (GlcN-1-P) to produce N-acetylglucosamine-1-phosphate (GlcNAc-1-P), which is converted into UDP-GlcNAc by the transfer of uridine 5-monophosphate (from uridine 5-triphosphate), a reaction catalyzed by the N-terminal domain. This chain is Bifunctional protein GlmU, found in Xanthobacter autotrophicus (strain ATCC BAA-1158 / Py2).